Here is a 356-residue protein sequence, read N- to C-terminus: DNA polymerase IV (356 aa).

The UmuC domain occupies 4 to 185 (IIHIDMDCYY…LALGKIPGVG (182 aa)). 2 residues coordinate Mg(2+): aspartate 8 and aspartate 103. Residue glutamate 104 is part of the active site.

Belongs to the DNA polymerase type-Y family. In terms of assembly, monomer. It depends on Mg(2+) as a cofactor.

It localises to the cytoplasm. The enzyme catalyses DNA(n) + a 2'-deoxyribonucleoside 5'-triphosphate = DNA(n+1) + diphosphate. Its function is as follows. Poorly processive, error-prone DNA polymerase involved in untargeted mutagenesis. Copies undamaged DNA at stalled replication forks, which arise in vivo from mismatched or misaligned primer ends. These misaligned primers can be extended by PolIV. Exhibits no 3'-5' exonuclease (proofreading) activity. May be involved in translesional synthesis, in conjunction with the beta clamp from PolIII. The protein is DNA polymerase IV of Pseudoalteromonas atlantica (strain T6c / ATCC BAA-1087).